Reading from the N-terminus, the 144-residue chain is Actin-associated protein FAM107A (144 aa).

Residues 66–112 (ELQRVLEHRRRNQLIKKKKEELEAKRLQCPFEQELLRRQQRLNQLEK) are a coiled coil. The Nuclear localization signal signature appears at 74–84 (RRRNQLIKKKK). Residues 105–124 (QRLNQLEKPPEKEEDHAPEF) are disordered. Positions 112–124 (KPPEKEEDHAPEF) are enriched in basic and acidic residues.

The protein belongs to the FAM107 family. As to quaternary structure, interacts with ACTB. Interacts with COMMD1; this interaction stabilizes COMMD1 in the nucleus. Interacts with MAP1A. Interacts with PRDX1. Interacts with F-actin. In terms of tissue distribution, widely expressed. Expressed in neurons. Expressed in malignant glial tumors. Expression is reduced or absent in a number of cancer cell lines.

It is found in the nucleus. The protein resides in the cytoplasm. The protein localises to the cytoskeleton. It localises to the stress fiber. Its subcellular location is the cell junction. It is found in the focal adhesion. The protein resides in the cell projection. The protein localises to the ruffle membrane. It localises to the synapse. Stress-inducible actin-binding protein that plays a role in synaptic and cognitive functions by modulating actin filamentous (F-actin) dynamics. Mediates polymerization of globular actin to F-actin. Also binds to, stabilizes and bundles F-actin. Involved in synaptic function by regulating neurite outgrowth in an actin-dependent manner and for the acquisition of hippocampus-dependent cognitive function, such as learning and long-term memory. Plays a role in the actin and microtubule cytoskeleton organization; negatively regulates focal adhesion (FA) assembly promoting malignant glial cell migration in an actin-, microtubule- and MAP1A-dependent manner. Also involved in neuroblastoma G1/S phase cell cycle progression and cell proliferation inhibition by stimulating ubiquitination of NF-kappa-B subunit RELA and NF-kappa-B degradation in a COMMD1- and actin-dependent manner. May play a role in tumor development. The polypeptide is Actin-associated protein FAM107A (Homo sapiens (Human)).